Consider the following 292-residue polypeptide: G1/S-specific cyclin-D3 (292 aa).

The 126-residue stretch at 27 to 152 folds into the Cyclin N-terminal domain; that stretch reads VLQSLLRLEE…LVLGKLKWDL (126 aa). The segment at 256–292 is disordered; it reads REAAQTAPSPVPKAPRGSSSQGPSQTSTPTDVTAIHL. Serine 264 and serine 279 each carry phosphoserine. Residues 272–285 are compositionally biased toward low complexity; it reads GSSSQGPSQTSTPT. The residue at position 283 (threonine 283) is a Phosphothreonine.

It belongs to the cyclin family. Cyclin D subfamily. In terms of assembly, interacts with the CDK4 and CDK6 protein kinases to form a serine/threonine kinase holoenzyme complex. The cyclin subunit imparts substrate specificity to the complex. Interacts with ATF5. Interacts with EIF3K. Component of the ternary complex cyclin D/CDK4/CDKN1B required for nuclear translocation and modulation of CDK4-mediated kinase activity. Can form similar complexes with either CDKN1A or CDKN2A. In terms of processing, phosphorylation at Thr-283 by MAP kinases is required for ubiquitination and degradation by the DCX(AMBRA1) complex. Post-translationally, ubiquitinated by the DCX(AMBRA1) complex during the transition from G1 to S cell phase, leading to its degradation: ubiquitination is dependent on Thr-283 phosphorylation. The DCX(AMBRA1) complex represents the major regulator of CCND3 stability during the G1/S transition. Polyubiquitinated by the SCF(FBXL2) complex, leading to proteasomal degradation.

It localises to the nucleus. Its subcellular location is the cytoplasm. Regulatory component of the cyclin D3-CDK4 (DC) complex that phosphorylates and inhibits members of the retinoblastoma (RB) protein family including RB1 and regulates the cell-cycle during G(1)/S transition. Phosphorylation of RB1 allows dissociation of the transcription factor E2F from the RB/E2F complex and the subsequent transcription of E2F target genes which are responsible for the progression through the G(1) phase. Hypophosphorylates RB1 in early G(1) phase. Cyclin D-CDK4 complexes are major integrators of various mitogenenic and antimitogenic signals. Component of the ternary complex, cyclin D3/CDK4/CDKN1B, required for nuclear translocation and activity of the cyclin D-CDK4 complex. Shows transcriptional coactivator activity with ATF5 independently of CDK4. The chain is G1/S-specific cyclin-D3 from Mus musculus (Mouse).